A 321-amino-acid polypeptide reads, in one-letter code: Opticin (321 aa).

Positions M1–T19 are cleaved as a signal peptide. Y61 is modified (sulfotyrosine). Residues L105–Q142 form the LRRNT domain. 6 LRR repeats span residues T143 to G164, K167 to L188, A191 to I212, K237 to S258, L259 to D279, and P289 to Y309. A disulfide bridge connects residues C278 and C311. N301 is a glycosylation site (N-linked (GlcNAc...) asparagine).

Belongs to the small leucine-rich proteoglycan (SLRP) family. SLRP class III subfamily. Homodimer. In terms of processing, O-glycosylated (sialylated oligosaccharides). Post-translationally, sulfated on tyrosine residues. Proteolytically cleaved by MMP1, MMP2, MMP3, MMP7, MMP8, MMP9, ADAMTS4, and ADAMTS5. Proteolytically cleaved by MMP13.

It is found in the secreted. Its subcellular location is the extracellular space. The protein resides in the extracellular matrix. Functionally, inhibits angiogenesis in the vitreous humor of the eye, and therefore represses neovascularization. Binds collagen fibrils. May be involved in collagen fiber organization via regulation of other members of the small leucine-rich repeat proteoglycan superfamily. The polypeptide is Opticin (OPTC) (Bos taurus (Bovine)).